Consider the following 401-residue polypeptide: Formate-dependent phosphoribosylglycinamide formyltransferase (401 aa).

N(1)-(5-phospho-beta-D-ribosyl)glycinamide contacts are provided by residues 27 to 28 and glutamate 87; that span reads EL. ATP is bound by residues arginine 119, lysine 160, 165 to 170, 200 to 203, and glutamate 208; these read SSGKGQ and EELV. An ATP-grasp domain is found at 124–313; that stretch reads EFAAEEVGVT…QFDLHLRAIL (190 aa). Mg(2+) contacts are provided by glutamate 272 and glutamate 284. N(1)-(5-phospho-beta-D-ribosyl)glycinamide is bound by residues aspartate 291, lysine 361, and 368 to 369; that span reads RR.

This sequence belongs to the PurK/PurT family. Homodimer.

The catalysed reaction is N(1)-(5-phospho-beta-D-ribosyl)glycinamide + formate + ATP = N(2)-formyl-N(1)-(5-phospho-beta-D-ribosyl)glycinamide + ADP + phosphate + H(+). The protein operates within purine metabolism; IMP biosynthesis via de novo pathway; N(2)-formyl-N(1)-(5-phospho-D-ribosyl)glycinamide from N(1)-(5-phospho-D-ribosyl)glycinamide (formate route): step 1/1. In terms of biological role, involved in the de novo purine biosynthesis. Catalyzes the transfer of formate to 5-phospho-ribosyl-glycinamide (GAR), producing 5-phospho-ribosyl-N-formylglycinamide (FGAR). Formate is provided by PurU via hydrolysis of 10-formyl-tetrahydrofolate. The polypeptide is Formate-dependent phosphoribosylglycinamide formyltransferase (Haloquadratum walsbyi (strain DSM 16790 / HBSQ001)).